The chain runs to 457 residues: Probable cytosolic Fe-S cluster assembly factor oxy-4 (457 aa).

Residue C25 coordinates [4Fe-4S] cluster. The interval 38–59 is disordered; that stretch reads KEESQVNIRTKKPKDKESSKTE. Positions 71, 74, 77, 176, 232, 380, and 384 each coordinate [4Fe-4S] cluster.

Belongs to the NARF family.

Component of the cytosolic iron-sulfur (Fe/S) protein assembly machinery. Required for maturation of extramitochondrial Fe/S proteins. The protein is Probable cytosolic Fe-S cluster assembly factor oxy-4 (oxy-4) of Caenorhabditis elegans.